The primary structure comprises 891 residues: Schlafen family member 5 (891 aa).

A Glycyl lysine isopeptide (Lys-Gly) (interchain with G-Cter in SUMO2) cross-link involves residue Lys59. Gly578 to Thr585 serves as a coordination point for ATP.

It belongs to the Schlafen family. Subgroup III subfamily.

Functionally, may have a role in hematopoietic cell differentiation. This Homo sapiens (Human) protein is Schlafen family member 5 (SLFN5).